The sequence spans 460 residues: tRNA modification GTPase MnmE (460 aa).

(6S)-5-formyl-5,6,7,8-tetrahydrofolate-binding residues include R24, E81, and K121. The TrmE-type G domain maps to 218 to 384 (GLVVAIAGPP…MVEALAGFAA (167 aa)). Residues 228-233 (NVGKST), 247-253 (SPHAGTT), and 272-275 (DTAG) each bind GTP. Residues S232 and T253 each coordinate Mg(2+). K460 contributes to the (6S)-5-formyl-5,6,7,8-tetrahydrofolate binding site.

Belongs to the TRAFAC class TrmE-Era-EngA-EngB-Septin-like GTPase superfamily. TrmE GTPase family. As to quaternary structure, homodimer. Heterotetramer of two MnmE and two MnmG subunits. K(+) serves as cofactor.

It localises to the cytoplasm. In terms of biological role, exhibits a very high intrinsic GTPase hydrolysis rate. Involved in the addition of a carboxymethylaminomethyl (cmnm) group at the wobble position (U34) of certain tRNAs, forming tRNA-cmnm(5)s(2)U34. This is tRNA modification GTPase MnmE from Rhodopseudomonas palustris (strain HaA2).